The primary structure comprises 348 residues: Aspartate carbamoyltransferase catalytic subunit (348 aa).

Arg-57 and Thr-58 together coordinate carbamoyl phosphate. An L-aspartate-binding site is contributed by Lys-86. Carbamoyl phosphate-binding residues include Arg-107, His-135, and Gln-138. L-aspartate-binding residues include Arg-172 and Arg-234. The carbamoyl phosphate site is built by Leu-274 and Pro-275.

The protein belongs to the aspartate/ornithine carbamoyltransferase superfamily. ATCase family. Heterododecamer (2C3:3R2) of six catalytic PyrB chains organized as two trimers (C3), and six regulatory PyrI chains organized as three dimers (R2).

The catalysed reaction is carbamoyl phosphate + L-aspartate = N-carbamoyl-L-aspartate + phosphate + H(+). It functions in the pathway pyrimidine metabolism; UMP biosynthesis via de novo pathway; (S)-dihydroorotate from bicarbonate: step 2/3. Functionally, catalyzes the condensation of carbamoyl phosphate and aspartate to form carbamoyl aspartate and inorganic phosphate, the committed step in the de novo pyrimidine nucleotide biosynthesis pathway. The sequence is that of Aspartate carbamoyltransferase catalytic subunit from Dichelobacter nodosus (strain VCS1703A).